Consider the following 361-residue polypeptide: ATP phosphoribosyltransferase regulatory subunit (361 aa).

The protein belongs to the class-II aminoacyl-tRNA synthetase family. HisZ subfamily. As to quaternary structure, heteromultimer composed of HisG and HisZ subunits.

The protein resides in the cytoplasm. It functions in the pathway amino-acid biosynthesis; L-histidine biosynthesis; L-histidine from 5-phospho-alpha-D-ribose 1-diphosphate: step 1/9. Functionally, required for the first step of histidine biosynthesis. May allow the feedback regulation of ATP phosphoribosyltransferase activity by histidine. The protein is ATP phosphoribosyltransferase regulatory subunit of Thermus thermophilus (strain ATCC 27634 / DSM 579 / HB8).